Here is a 94-residue protein sequence, read N- to C-terminus: Small ribosomal subunit protein bS18c (94 aa).

Belongs to the bacterial ribosomal protein bS18 family. As to quaternary structure, part of the 30S ribosomal subunit.

It is found in the plastid. The protein localises to the chloroplast. The sequence is that of Small ribosomal subunit protein bS18c from Manihot esculenta (Cassava).